Here is a 78-residue protein sequence, read N- to C-terminus: Delta-conotoxin-like S6.8 (78 aa).

The N-terminal stretch at 1–22 (MKLTCMMIVAVLFLTAWTFVTA) is a signal peptide. Positions 23 to 53 (DDSRNGLKNLFPKARHEMKNPDASKLNKRDG) are excised as a propeptide. Intrachain disulfides connect Cys54/Cys69, Cys61/Cys73, and Cys68/Cys77.

It belongs to the conotoxin O1 superfamily. Expressed by the venom duct.

The protein localises to the secreted. In terms of biological role, delta-conotoxins bind to site 6 of voltage-gated sodium channels (Nav) and inhibit the inactivation process. The sequence is that of Delta-conotoxin-like S6.8 from Conus striatus (Striated cone).